We begin with the raw amino-acid sequence, 122 residues long: Urocortin (122 aa).

The first 25 residues, 1–25 (MRQRGRATLLVALLLLVQLRPESSQ), serve as a signal peptide directing secretion. The propeptide occupies 26–80 (WSPAAAAANVVQDPNLRWNPGVRNQGGGVRALLLLLAERFPRRAGSEPAGERQRR). Val-120 carries the post-translational modification Valine amide.

The protein belongs to the sauvagine/corticotropin-releasing factor/urotensin I family. In terms of assembly, interacts with CRHR1 and CRHR2 (via their N-terminal extracellular domain).

It is found in the secreted. Functionally, acts in vitro to stimulate the secretion of adrenocorticotropic hormone (ACTH). Binds with high affinity to CRF receptor types 1, 2-alpha, and 2-beta. Plays a role in the establishment of normal hearing thresholds. Reduces food intake and regulates ghrelin levels in gastric body and plasma. In Rattus norvegicus (Rat), this protein is Urocortin (Ucn).